Here is a 459-residue protein sequence, read N- to C-terminus: MTNYAIILAAGKGTRMKSDLPKVLHKVAGISMLEHVFRSVSAIDPEKTVTVVGHKAELVEQVLAGQTDFVRQTEQLGTGHAVMMAEPVLENLTGQTLVIAGDTPLITGESLKNLIDFHINHKNVATILTAEADNPFGYGRIVRNQHDEVLKIVEQKDASDFEQQIKEINTGTYVFDNARLFEALKNINTNNAQGEYYITDVIGIFRENGEKVGAYTLKDFDESLGVNDRVALATAESVMRRRINQQHMVNGVSFVNPHATYIGVDVEIAPEVQVEANVTLKGQTKIGAETILTNGTYIVDSVIGERTVITNSMIEESSVADGVTVGPYAHIRPGSSLAKDVHVGNFVEVKGSSIGENTKAGHLTYIGNSEVGANVNFGAGTITVNYDGQKKYKTIIGDNVFVGSNSTIIAPVELGDNSLVGAGSTITKDVPADAIALGRGRQINKEDYAKRLPHHPQNK.

Residues Met-1 to Arg-229 form a pyrophosphorylase region. Residues Leu-8–Gly-11, Lys-22, Gln-72, and Gly-77–Thr-78 contribute to the UDP-N-acetyl-alpha-D-glucosamine site. Asp-102 contributes to the Mg(2+) binding site. Positions 139, 154, 169, and 227 each coordinate UDP-N-acetyl-alpha-D-glucosamine. Asn-227 provides a ligand contact to Mg(2+). The tract at residues Val-230–Asn-250 is linker. The tract at residues Gly-251–Lys-459 is N-acetyltransferase. Residues Arg-332 and Lys-350 each coordinate UDP-N-acetyl-alpha-D-glucosamine. His-362 serves as the catalytic Proton acceptor. UDP-N-acetyl-alpha-D-glucosamine is bound by residues Tyr-365 and Asn-376. Residues Ala-379, Asn-385–Tyr-386, Ser-404, Ala-422, and Arg-439 contribute to the acetyl-CoA site.

This sequence in the N-terminal section; belongs to the N-acetylglucosamine-1-phosphate uridyltransferase family. In the C-terminal section; belongs to the transferase hexapeptide repeat family. As to quaternary structure, homotrimer. The cofactor is Mg(2+).

Its subcellular location is the cytoplasm. The catalysed reaction is alpha-D-glucosamine 1-phosphate + acetyl-CoA = N-acetyl-alpha-D-glucosamine 1-phosphate + CoA + H(+). It catalyses the reaction N-acetyl-alpha-D-glucosamine 1-phosphate + UTP + H(+) = UDP-N-acetyl-alpha-D-glucosamine + diphosphate. The protein operates within nucleotide-sugar biosynthesis; UDP-N-acetyl-alpha-D-glucosamine biosynthesis; N-acetyl-alpha-D-glucosamine 1-phosphate from alpha-D-glucosamine 6-phosphate (route II): step 2/2. It participates in nucleotide-sugar biosynthesis; UDP-N-acetyl-alpha-D-glucosamine biosynthesis; UDP-N-acetyl-alpha-D-glucosamine from N-acetyl-alpha-D-glucosamine 1-phosphate: step 1/1. It functions in the pathway bacterial outer membrane biogenesis; LPS lipid A biosynthesis. In terms of biological role, catalyzes the last two sequential reactions in the de novo biosynthetic pathway for UDP-N-acetylglucosamine (UDP-GlcNAc). The C-terminal domain catalyzes the transfer of acetyl group from acetyl coenzyme A to glucosamine-1-phosphate (GlcN-1-P) to produce N-acetylglucosamine-1-phosphate (GlcNAc-1-P), which is converted into UDP-GlcNAc by the transfer of uridine 5-monophosphate (from uridine 5-triphosphate), a reaction catalyzed by the N-terminal domain. This chain is Bifunctional protein GlmU, found in Streptococcus sanguinis (strain SK36).